We begin with the raw amino-acid sequence, 702 residues long: K(+)-insensitive pyrophosphate-energized proton pump (702 aa).

4 helical membrane passes run 3 to 23, 63 to 83, 130 to 150, and 162 to 182; these read GIYLFVVAAALAALGYGALTI, AVVFVILTALLGISVGFGFLI, MLVAGLALLSVAFYYILLVGI, and VALGFGASLISIFARLGGGIF. Lys184 is a substrate binding site. Asp187, Asp191, Asn214, and Asp217 together coordinate Mg(2+). 6 helical membrane passes run 234–254, 255–275, 294–314, 329–349, 379–399, and 407–427; these read AVTVVATMVLASIFFAGVPAM, TSMMAYPLAIGGVCILASILG, GFLVSAGASFVGIILATAIVP, GFDLFLCAVIGLLVTGLLIWV, GLAISMEATALPALIICAAII, and LFGIAITVTSMLALAGMVVAL. Asp435 contacts Mg(2+). 4 helical membrane-spanning segments follow: residues 466–486, 517–537, 586–606, and 612–632; these read AVTKGYAIGSAGLGALVLFAA, YVVVGLFIGGLLPYLFGSMGM, IIPSLLPVLAPIVLYFVILGI, and AFSALGAMLLGVIVTGLFVAI. Ca(2+) contacts are provided by Asp642, Asp668, and Asp672. Lys675 serves as a coordination point for substrate.

The protein belongs to the H(+)-translocating pyrophosphatase (TC 3.A.10) family. K(+)-insensitive subfamily. As to quaternary structure, homodimer. Mg(2+) serves as cofactor.

The protein localises to the cell inner membrane. The catalysed reaction is diphosphate + H2O + H(+)(in) = 2 phosphate + 2 H(+)(out). Proton pump that utilizes the energy of pyrophosphate hydrolysis as the driving force for proton movement across the membrane. Generates a proton motive force. The protein is K(+)-insensitive pyrophosphate-energized proton pump of Rhodospirillum rubrum (strain ATCC 11170 / ATH 1.1.1 / DSM 467 / LMG 4362 / NCIMB 8255 / S1).